The primary structure comprises 206 residues: MELNVTTLEGKAAGSVNLSDTIFGLEPRTDIIQRVVNWQLAKRQAGTHKTKGRAEIARTGKKMYKQKGTGGARHGSARVPQFRGGGRAFGPVVRSHAYDLPKKVRALGLRHALSAKAKDGSLVVLDNAELKDAKTKALIGHFSGLGLTSALIVDGAEVNNGFAQAARNIPHIDVLPIQGINVYDILRRQKLVLTKAAVDALEARFK.

Belongs to the universal ribosomal protein uL4 family. In terms of assembly, part of the 50S ribosomal subunit.

Functionally, one of the primary rRNA binding proteins, this protein initially binds near the 5'-end of the 23S rRNA. It is important during the early stages of 50S assembly. It makes multiple contacts with different domains of the 23S rRNA in the assembled 50S subunit and ribosome. Forms part of the polypeptide exit tunnel. The chain is Large ribosomal subunit protein uL4 from Afipia carboxidovorans (strain ATCC 49405 / DSM 1227 / KCTC 32145 / OM5) (Oligotropha carboxidovorans).